The sequence spans 20 residues: Thylakoid lumenal 22 kDa protein (20 aa).

It localises to the plastid. The protein localises to the chloroplast thylakoid lumen. In Spinacia oleracea (Spinach), this protein is Thylakoid lumenal 22 kDa protein.